Here is a 617-residue protein sequence, read N- to C-terminus: uncharacterized protein (617 aa).

The helical transmembrane segment at 103 to 123 threads the bilayer; sequence AGVLLAKFFPLLFLYPLTYLA. Positions 200-609 constitute a Protein kinase domain; sequence FETREPVGSG…DILEAAKPFL (410 aa). Residues 206 to 214 and lysine 302 each bind ATP; that span reads VGSGCVAQV. Aspartate 436 functions as the Proton acceptor in the catalytic mechanism.

The protein belongs to the protein kinase superfamily. ADCK protein kinase family.

It is found in the mitochondrion. The protein localises to the membrane. Functionally, the function of this protein is not yet clear. It is not known if it has protein kinase activity and what type of substrate it would phosphorylate (Ser, Thr or Tyr). Involved in the mitochondrial import of CoQ precursors, plays a role in muscle mitochondrial function and fatty acid beta-oxidation. This is an uncharacterized protein from Mus musculus (Mouse).